Consider the following 439-residue polypeptide: Serine hydroxymethyltransferase (439 aa).

127–129 (AHV) contributes to the (6S)-5,6,7,8-tetrahydrofolate binding site. Lys-233 carries the post-translational modification N6-(pyridoxal phosphate)lysine.

This sequence belongs to the SHMT family. In terms of assembly, homodimer. Pyridoxal 5'-phosphate serves as cofactor.

It localises to the cytoplasm. Its pathway is amino-acid biosynthesis; glycine biosynthesis; glycine from L-serine: step 1/1. In terms of biological role, catalyzes the reversible interconversion of serine and glycine with a modified folate serving as the one-carbon carrier. Also exhibits a pteridine-independent aldolase activity toward beta-hydroxyamino acids, producing glycine and aldehydes, via a retro-aldol mechanism. The polypeptide is Serine hydroxymethyltransferase (Aeropyrum pernix (strain ATCC 700893 / DSM 11879 / JCM 9820 / NBRC 100138 / K1)).